The sequence spans 1418 residues: MAHYRVSSEVENIMNRDRSHRKNEEEDEEEALKLAAMEKLQRLPTYDRARKAVLKGITGGFKEIDMKDLGLAERRELFDRVMTMDDEDWHGEYLRRLKSRFDRVSLHLPTIEVRFEDLNVTAEAYAGSKTVPTVLNSYVNLLKGIGTKIRVLPDRKKRISILNDVSGIIKPGRLTLLLGPPGSGKSTLLKALSGKTETGLRSTGKVTYNGHELHEFVPERTAGYIDQYDVHLPDLTVRETLKFSAKCQGVGTGYDMLAELLRREKDLNIKPDPYLDALMKASVIKGHKEYVVTDYVLKVLGLEICADTIVGNHMKRGISGGQKKRVTTGEMLVGPVGAFFMDNISDGLDSSTTFQIVKSIKQMIHVFDKTALISLLQPPPETFELFDDVIILGEGHIVYQGPREDVLEFFEFMGFKCPERKGIADYLQEILSKKDQEQYWANPELPYRYVTAKKFEEGFKIHHFGRAMRSQLATPFDRLKNHRAALTRTTYGASKLELLKACLERESILMKRNLRTFVLKSLQLIINAILIGVVFWQQKNYPSTVEDGIIYMGAIYLEVQMIVFSGFFELPMTIDKLPVFYKQRHFSFYPSWAFSLPTSIITFPLSFVEVFIVVLITYFTIGYDLTVPSFLKHYLVLALCGQMSYGLFRCIAAVTRNHVVSNTMGCLAVMWLMTFSGYVLSRNQVHKWLTWAYWTSPMMYIQTAVSVNEFRSESWKDGLGVAVLKSRGFFVETYWYWIGLLALILSTILSNIITSLCLAFLKQYGISKTAVLPDEREEADSNNTTGRDYTGTTMERFFDRVVTTRTCNDKKLRIPFKPLYMTFENITYSVDTPKEMKEKGIRENKLVLLNGLSGAFRPGVLTALMGVSGAGKTTLMDVLAGRKNTGYIQGEIYVSGFPKKQDSFARVSGYCEQSDIHSPLLTVYESLLYSAWLRLPPDIDTHTRELFIEEVMELIELKALREMLVGYVGISGLSTEQRKRMTIAVELVANPSILFMDEPTSGLDARAAAIVMRTVRNTVDTGRTVVCTIHQPSIDIFESFDELFLLTRGGEEIYVGPIGHHSSQLIEYFEGIRGVGKIKEGYNPATWALEVTTRAQEDVLGVTFAQVYKKSNLYRRNKDLIKELNNIPPHAQDIHFSTKYSQSYLSQFQACLWKQHKSYWRNVPYNAVRFSFGAAVGIMYGIIFWSLGKRKGTRQDIFNSVGAMSTVVGFLSSQSAATVRPVVIAERTVFYREAGAGMYSALPYAFSQVIIEIPYTMAQACIYGVIVYGMIGYEWTASKFFLNIFFTFISILYSIYTGIMVISVSPNQEIASILNGVISTSWNVFSGFTIPRPRMHVWLRWFTYVCPGWWGLYGLTIAQYGDVETRLDTGETVVEFMKNYYGYEYNFLWVVSLTLIAFSMFFVFIYAFSVKILNFQKR.

The tract at residues 1–27 (MAHYRVSSEVENIMNRDRSHRKNEEED) is disordered. Residues 147 to 419 (TKIRVLPDRK…FEFMGFKCPE (273 aa)) enclose the ABC transporter 1 domain. Residue 179-186 (GPPGSGKS) coordinates ATP. The 214-residue stretch at 497-710 (ELLKACLERE…IQTAVSVNEF (214 aa)) folds into the ABC transmembrane type-2 1 domain. The next 6 helical transmembrane spans lie at 516–536 (TFVLKSLQLIINAILIGVVFW), 548–568 (GIIYMGAIYLEVQMIVFSGFF), 600–620 (IITFPLSFVEVFIVVLITYFT), 634–654 (YLVLALCGQMSYGLFRCIAAV), 659–679 (VVSNTMGCLAVMWLMTFSGYV), and 729–749 (FFVETYWYWIGLLALILSTIL). Residues 821–1073 (MTFENITYSV…QLIEYFEGIR (253 aa)) form the ABC transporter 2 domain. ATP is bound at residue 866-873 (GVSGAGKT). The ABC transmembrane type-2 2 domain occupies 1146–1360 (SQFQACLWKQ…GLYGLTIAQY (215 aa)). 7 consecutive transmembrane segments (helical) span residues 1167–1187 (AVRFSFGAAVGIMYGIIFWSL), 1197–1217 (IFNSVGAMSTVVGFLSSQSAA), 1249–1269 (VIIEIPYTMAQACIYGVIVYG), 1284–1304 (IFFTFISILYSIYTGIMVISV), 1310–1330 (IASILNGVISTSWNVFSGFTI), 1341–1361 (WFTYVCPGWWGLYGLTIAQYG), and 1387–1407 (FLWVVSLTLIAFSMFFVFIYA).

It belongs to the ABC transporter superfamily. ABCG family. PDR (TC 3.A.1.205) subfamily. In terms of tissue distribution, expressed in roots and siliques at low levels.

It is found in the membrane. In terms of biological role, may be a general defense protein. This is ABC transporter G family member 38 (ABCG38) from Arabidopsis thaliana (Mouse-ear cress).